The sequence spans 401 residues: Argininosuccinate synthase (401 aa).

9–17 (AYSGGLDTS) contacts ATP. An L-citrulline-binding site is contributed by Tyr86. Gly116 lines the ATP pocket. L-aspartate is bound by residues Thr118, Asn122, and Asp123. Asn122 contacts L-citrulline. Residues Arg126, Ser174, Ser183, Glu259, and Tyr271 each coordinate L-citrulline.

It belongs to the argininosuccinate synthase family. Type 1 subfamily. As to quaternary structure, homotetramer.

The protein localises to the cytoplasm. It carries out the reaction L-citrulline + L-aspartate + ATP = 2-(N(omega)-L-arginino)succinate + AMP + diphosphate + H(+). It functions in the pathway amino-acid biosynthesis; L-arginine biosynthesis; L-arginine from L-ornithine and carbamoyl phosphate: step 2/3. This Bacillus cereus (strain AH187) protein is Argininosuccinate synthase.